We begin with the raw amino-acid sequence, 274 residues long: Large ribosomal subunit protein uL2cz/uL2cy (274 aa).

Disordered stretches follow at residues 1–23 (MAIHLYKTSTPSTRNRAVDSQVK) and 224–274 (NPVD…RRSK).

It belongs to the universal ribosomal protein uL2 family. As to quaternary structure, part of the 50S ribosomal subunit.

The protein resides in the plastid. Its subcellular location is the chloroplast. This Vitis vinifera (Grape) protein is Large ribosomal subunit protein uL2cz/uL2cy (rpl2-A).